The primary structure comprises 199 residues: Peptidyl-tRNA hydrolase (199 aa).

TRNA is bound at residue Tyr-15. His-20 serves as the catalytic Proton acceptor. TRNA contacts are provided by Tyr-66, Asn-68, and Asn-114.

Belongs to the PTH family. In terms of assembly, monomer.

The protein resides in the cytoplasm. The catalysed reaction is an N-acyl-L-alpha-aminoacyl-tRNA + H2O = an N-acyl-L-amino acid + a tRNA + H(+). Hydrolyzes ribosome-free peptidyl-tRNAs (with 1 or more amino acids incorporated), which drop off the ribosome during protein synthesis, or as a result of ribosome stalling. Functionally, catalyzes the release of premature peptidyl moieties from peptidyl-tRNA molecules trapped in stalled 50S ribosomal subunits, and thus maintains levels of free tRNAs and 50S ribosomes. The polypeptide is Peptidyl-tRNA hydrolase (Burkholderia cenocepacia (strain ATCC BAA-245 / DSM 16553 / LMG 16656 / NCTC 13227 / J2315 / CF5610) (Burkholderia cepacia (strain J2315))).